A 548-amino-acid polypeptide reads, in one-letter code: tRNA (guanine(26)-N(2))-dimethyltransferase (548 aa).

In terms of domain architecture, Trm1 methyltransferase spans 30–470 (ASLTEGSAII…APWSFVWDVL (441 aa)). Residues Arg57, Arg137, Asp155, and Ala186 each contribute to the S-adenosyl-L-methionine site. The Zn(2+) site is built by Cys317, Cys320, Cys354, and Cys357. The tract at residues 523–548 (QMNPTENWGPKSKPGKRTIAEVDSKS) is disordered.

The protein belongs to the class I-like SAM-binding methyltransferase superfamily. Trm1 family.

The protein resides in the mitochondrion. It localises to the nucleus. It is found in the cytoplasm. The enzyme catalyses guanosine(26) in tRNA + 2 S-adenosyl-L-methionine = N(2)-dimethylguanosine(26) in tRNA + 2 S-adenosyl-L-homocysteine + 2 H(+). In terms of biological role, dimethylates a single guanine residue at position 26 of nuclear- and mitochondrial-encoded tRNAs using S-adenosyl-L-methionine as donor of the methyl groups. Also has tRNA strand annealing and dissociation activity independently of its tRNA guanine-dimethyltransferase activity. This chain is tRNA (guanine(26)-N(2))-dimethyltransferase, found in Schizosaccharomyces pombe (strain 972 / ATCC 24843) (Fission yeast).